The following is a 505-amino-acid chain: Maturase K (505 aa).

It belongs to the intron maturase 2 family. MatK subfamily.

It is found in the plastid. The protein resides in the chloroplast. Usually encoded in the trnK tRNA gene intron. Probably assists in splicing its own and other chloroplast group II introns. This chain is Maturase K, found in Apocynum androsaemifolium (Spreading dogbane).